We begin with the raw amino-acid sequence, 214 residues long: MRIILLGAPGTGKGTQAKLITENYNIPKISTGDILRENIQKKNTIGKKIHNILKNGELVSNRIVCNLIGERIQKKDCIHGFLLDGFPRTQKQAEYISNLKIKIDYVLELIVPYELILKRICGRRVHTPSGRIYNINYNPPREEGKDDLTQEKLTIREDDTIEIVKKRLENYEKNSFLLNKYYLREKKLKKLQYFKIDGKQSIYKIQREIKMMLK.

10-15 (GTGKGT) lines the ATP pocket. Residues 30–59 (STGDILRENIQKKNTIGKKIHNILKNGELV) form an NMP region. Residues T31, R36, 57–59 (ELV), 85–88 (GFPR), and Q92 each bind AMP. The segment at 122-159 (GRRVHTPSGRIYNINYNPPREEGKDDLTQEKLTIREDD) is LID. Residues R123 and 132-133 (IY) each bind ATP. AMP contacts are provided by R156 and R167. Q200 provides a ligand contact to ATP.

This sequence belongs to the adenylate kinase family. Monomer.

It is found in the cytoplasm. The catalysed reaction is AMP + ATP = 2 ADP. It participates in purine metabolism; AMP biosynthesis via salvage pathway; AMP from ADP: step 1/1. In terms of biological role, catalyzes the reversible transfer of the terminal phosphate group between ATP and AMP. Plays an important role in cellular energy homeostasis and in adenine nucleotide metabolism. The sequence is that of Adenylate kinase from Buchnera aphidicola subsp. Schizaphis graminum (strain Sg).